The primary structure comprises 184 residues: Holliday junction branch migration complex subunit RuvA (184 aa).

The domain I stretch occupies residues 1–62 (MIVGLVGEVL…EDSESLYGFV (62 aa)). A domain II region spans residues 63 to 134 (DINEKKMFDR…ELGEFDISES (72 aa)). A flexible linker region spans residues 134–135 (SN). Positions 136 to 184 (VTSSAFQEASMALQSLGFKKEQIQKALQECTATDTASLVKEALKKIQKL) are domain III.

Belongs to the RuvA family. Homotetramer. Forms an RuvA(8)-RuvB(12)-Holliday junction (HJ) complex. HJ DNA is sandwiched between 2 RuvA tetramers; dsDNA enters through RuvA and exits via RuvB. An RuvB hexamer assembles on each DNA strand where it exits the tetramer. Each RuvB hexamer is contacted by two RuvA subunits (via domain III) on 2 adjacent RuvB subunits; this complex drives branch migration. In the full resolvosome a probable DNA-RuvA(4)-RuvB(12)-RuvC(2) complex forms which resolves the HJ.

It is found in the cytoplasm. Functionally, the RuvA-RuvB-RuvC complex processes Holliday junction (HJ) DNA during genetic recombination and DNA repair, while the RuvA-RuvB complex plays an important role in the rescue of blocked DNA replication forks via replication fork reversal (RFR). RuvA specifically binds to HJ cruciform DNA, conferring on it an open structure. The RuvB hexamer acts as an ATP-dependent pump, pulling dsDNA into and through the RuvAB complex. HJ branch migration allows RuvC to scan DNA until it finds its consensus sequence, where it cleaves and resolves the cruciform DNA. The chain is Holliday junction branch migration complex subunit RuvA from Nitratiruptor sp. (strain SB155-2).